A 318-amino-acid polypeptide reads, in one-letter code: NAD kinase (318 aa).

Residue Asp80 is the Proton acceptor of the active site. Residues 80–81, Arg85, 155–156, Asp185, and 196–201 each bind NAD(+); these read DG, NE, and TAYAFS.

The protein belongs to the NAD kinase family. The cofactor is a divalent metal cation.

The protein resides in the cytoplasm. It catalyses the reaction NAD(+) + ATP = ADP + NADP(+) + H(+). In terms of biological role, involved in the regulation of the intracellular balance of NAD and NADP, and is a key enzyme in the biosynthesis of NADP. Catalyzes specifically the phosphorylation on 2'-hydroxyl of the adenosine moiety of NAD to yield NADP. In Corynebacterium efficiens (strain DSM 44549 / YS-314 / AJ 12310 / JCM 11189 / NBRC 100395), this protein is NAD kinase.